The following is a 146-amino-acid chain: Hemoglobin subunit beta (146 aa).

Val-1 is subject to N-acetylvaline. Positions 2-146 constitute a Globin domain; that stretch reads HLTDAEKAAI…VATALGHKYH (145 aa). At Lys-59 the chain carries N6-acetyllysine. Residue His-63 participates in heme b binding. Lys-82 is subject to N6-acetyllysine. Position 92 (His-92) interacts with heme b. Position 93 is an S-nitrosocysteine (Cys-93). Lys-144 carries the post-translational modification N6-acetyllysine.

Belongs to the globin family. In terms of assembly, heterotetramer of two alpha chains and two beta chains. As to expression, red blood cells.

Functionally, involved in oxygen transport from the lung to the various peripheral tissues. The protein is Hemoglobin subunit beta (HBB) of Ondatra zibethicus (Muskrat).